The sequence spans 248 residues: Anamorsin homolog (248 aa).

The tract at residues 4 to 129 (FKGLQKSLYI…ETGSSARLSF (126 aa)) is N-terminal SAM-like domain. The linker stretch occupies residues 130–161 (AKKNASAVNVWKISGDDEELIDEEELLDEEDK). [2Fe-2S] cluster is bound by residues Cys172, Cys181, Cys184, and Cys186. A fe-S binding site A region spans residues 172-186 (CSTTGKRKACKNCSC). The [4Fe-4S] cluster site is built by Cys209, Cys212, Cys220, and Cys223. 2 short sequence motifs (cx2C motif) span residues 209–212 (CGNC) and 220–223 (CSTC). Positions 209–223 (CGNCYLGDAFRCSTC) are fe-S binding site B.

This sequence belongs to the anamorsin family. In terms of assembly, monomer. [2Fe-2S] cluster serves as cofactor. It depends on [4Fe-4S] cluster as a cofactor.

It localises to the cytoplasm. Its subcellular location is the mitochondrion intermembrane space. Component of the cytosolic iron-sulfur (Fe-S) protein assembly (CIA) machinery. Required for the maturation of extramitochondrial Fe-S proteins. Part of an electron transfer chain functioning in an early step of cytosolic Fe-S biogenesis, facilitating the de novo assembly of a [4Fe-4S] cluster on the cytosolic Fe-S scaffold complex. Electrons are transferred from NADPH via a FAD- and FMN-containing diflavin oxidoreductase. Together with the diflavin oxidoreductase, also required for the assembly of the diferric tyrosyl radical cofactor of ribonucleotide reductase (RNR), probably by providing electrons for reduction during radical cofactor maturation in the catalytic small subunit. This Drosophila yakuba (Fruit fly) protein is Anamorsin homolog.